The primary structure comprises 206 residues: Phosphoheptose isomerase (206 aa).

Residues 37-195 (LVDAFKAGKK…IEQKMDINNE (159 aa)) form the SIS domain. 52–54 (NGG) provides a ligand contact to substrate. Zn(2+) contacts are provided by H61 and E65. Substrate contacts are provided by residues E65, 93 to 94 (ND), 119 to 121 (STS), S124, and Q172. Zn(2+) is bound by residues Q172 and H180.

It belongs to the SIS family. GmhA subfamily. In terms of assembly, homotetramer. Zn(2+) is required as a cofactor.

The protein localises to the cytoplasm. It carries out the reaction 2 D-sedoheptulose 7-phosphate = D-glycero-alpha-D-manno-heptose 7-phosphate + D-glycero-beta-D-manno-heptose 7-phosphate. It functions in the pathway carbohydrate biosynthesis; D-glycero-D-manno-heptose 7-phosphate biosynthesis; D-glycero-alpha-D-manno-heptose 7-phosphate and D-glycero-beta-D-manno-heptose 7-phosphate from sedoheptulose 7-phosphate: step 1/1. In terms of biological role, catalyzes the isomerization of sedoheptulose 7-phosphate in D-glycero-D-manno-heptose 7-phosphate. This Hamiltonella defensa subsp. Acyrthosiphon pisum (strain 5AT) protein is Phosphoheptose isomerase.